A 312-amino-acid chain; its full sequence is Methionyl-tRNA formyltransferase (312 aa).

Position 107-110 (107-110 (SLLP)) interacts with (6S)-5,6,7,8-tetrahydrofolate.

It belongs to the Fmt family.

It catalyses the reaction L-methionyl-tRNA(fMet) + (6R)-10-formyltetrahydrofolate = N-formyl-L-methionyl-tRNA(fMet) + (6S)-5,6,7,8-tetrahydrofolate + H(+). Functionally, attaches a formyl group to the free amino group of methionyl-tRNA(fMet). The formyl group appears to play a dual role in the initiator identity of N-formylmethionyl-tRNA by promoting its recognition by IF2 and preventing the misappropriation of this tRNA by the elongation apparatus. This Borreliella burgdorferi (strain ZS7) (Borrelia burgdorferi) protein is Methionyl-tRNA formyltransferase.